Consider the following 1139-residue polypeptide: Liprin-alpha (1139 aa).

4 coiled-coil regions span residues 30 to 144 (PSDR…SLRM), 172 to 298 (EHHK…KNQI), 329 to 517 (IRDL…AQFQ), and 655 to 701 (QDAQ…EFYD). 2 disordered regions span residues 700 to 720 (YDDQGISTRSSPRASPQLDNM) and 764 to 847 (NQFD…DRRK). 2 stretches are compositionally biased toward polar residues: residues 704–719 (GISTRSSPRASPQLDN) and 778–787 (PASSVASSTD). SAM domains follow at residues 867–933 (WNGP…MVSL), 952–1016 (NHEY…LKKV), and 1040–1109 (WSNE…LVND).

It belongs to the liprin family. Liprin-alpha subfamily. As to expression, detected in vulval muscle and other cells near the vulva; in neurons located in the lateral ganglion, posterior ganglion, ventral cord and lateral body; and in pharyngeal and body wall muscle cells.

The protein resides in the synapse. Functionally, may play a role in regulating the structure of the neuronal region, called the active zone, from which synaptic vesicles send neurotransmitter signals across the synapse. This may be in association with the liprin-beta protein hlb-1. This is Liprin-alpha from Caenorhabditis elegans.